The primary structure comprises 201 residues: MSSEDKKPVVDKKEEAAPKPPSSAVFSMFGGKKAEKPETKKDEEDTKEETKKEGDDAPESPDIHFEPVVHLEKVDVKTMEEDEEVLYKVRAKLFRFDADAKEWKERGTGDCKFLKNKKTNKVRILMRRDKTLKICANHIIAPEYTLKPNVGSDRSWVYACTADIAEGEAEAFTFAIRFGSKENADKFKEEFEKAQEINKKA.

Composition is skewed to basic and acidic residues over residues 1–17 (MSSEDKKPVVDKKEEAA) and 32–66 (KKAEKPETKKDEEDTKEETKKEGDDAPESPDIHFE). The disordered stretch occupies residues 1–66 (MSSEDKKPVV…APESPDIHFE (66 aa)). Phosphoserine is present on S60. One can recognise a RanBD1 domain in the interval 64-200 (HFEPVVHLEK…FEKAQEINKK (137 aa)).

It belongs to the RANBP1 family. Interacts with GSP1 and PRP20.

It localises to the cytoplasm. It is found in the nucleus. In terms of biological role, important for the export of protein containing nuclear export signal (NES) out of the nucleus. Stimulates the GTPase activity of GSP1 and GSP2. The chain is Ran-specific GTPase-activating protein 1 (YRB1) from Saccharomyces cerevisiae (strain ATCC 204508 / S288c) (Baker's yeast).